A 317-amino-acid polypeptide reads, in one-letter code: UV DNA damage endonuclease (317 aa).

The protein belongs to the uve1/UvsE family.

Functionally, component in a DNA repair pathway. Removal of UV LIGHT damaged nucleotides. Recognizes pyrimidine dimers and cleave a phosphodiester bond immediately 5' to the lesion. In Bacillus cereus (strain B4264), this protein is UV DNA damage endonuclease.